Here is a 196-residue protein sequence, read N- to C-terminus: uncharacterized protein (196 aa).

The helical transmembrane segment at 20 to 40 threads the bilayer; the sequence is GALALGCIALLLMGIVGCTTV.

The protein resides in the membrane. This is an uncharacterized protein from Mycobacterium tuberculosis (strain CDC 1551 / Oshkosh).